A 509-amino-acid polypeptide reads, in one-letter code: Maturase K (509 aa).

This sequence belongs to the intron maturase 2 family. MatK subfamily.

The protein resides in the plastid. It is found in the chloroplast. Usually encoded in the trnK tRNA gene intron. Probably assists in splicing its own and other chloroplast group II introns. This chain is Maturase K, found in Solanum lycopersicum (Tomato).